A 250-amino-acid chain; its full sequence is DNA repair protein RecO (250 aa).

This sequence belongs to the RecO family.

Functionally, involved in DNA repair and RecF pathway recombination. The polypeptide is DNA repair protein RecO (Syntrophomonas wolfei subsp. wolfei (strain DSM 2245B / Goettingen)).